A 173-amino-acid polypeptide reads, in one-letter code: Cytochrome c-type biogenesis protein CcmE (173 aa).

Topologically, residues 1 to 8 (MMSRKKRR) are cytoplasmic. A helical; Signal-anchor for type II membrane protein transmembrane segment spans residues 9–29 (LWIVIACGIGLSTAVALMLFA). The Periplasmic portion of the chain corresponds to 30–173 (FRSSLSFFMS…PAQIEASNNG (144 aa)). Residues histidine 127 and tyrosine 131 each contribute to the heme site. Residues 145–173 (KWNPKFGPPPNAGAWDDKSPAQIEASNNG) are disordered.

Belongs to the CcmE/CycJ family.

Its subcellular location is the cell inner membrane. In terms of biological role, heme chaperone required for the biogenesis of c-type cytochromes. Transiently binds heme delivered by CcmC and transfers the heme to apo-cytochromes in a process facilitated by CcmF and CcmH. The polypeptide is Cytochrome c-type biogenesis protein CcmE (Acidiphilium cryptum (strain JF-5)).